We begin with the raw amino-acid sequence, 221 residues long: uncharacterized protein (221 aa).

Residues 1–26 (MVRLVPRAFAATVALLAAGFSPATAS) form the signal peptide.

This is an uncharacterized protein from Mycobacterium tuberculosis (strain CDC 1551 / Oshkosh).